The following is a 488-amino-acid chain: 3-octaprenyl-4-hydroxybenzoate carboxy-lyase (488 aa).

Position 172 (asparagine 172) interacts with Mn(2+). Residues 175-177 (IYR), 189-191 (RWL), and 194-195 (RG) each bind prenylated FMN. Glutamate 238 contributes to the Mn(2+) binding site. Aspartate 287 (proton donor) is an active-site residue.

The protein belongs to the UbiD family. As to quaternary structure, homohexamer. Prenylated FMN is required as a cofactor. The cofactor is Mn(2+).

The protein resides in the cell membrane. The catalysed reaction is a 4-hydroxy-3-(all-trans-polyprenyl)benzoate + H(+) = a 2-(all-trans-polyprenyl)phenol + CO2. Its pathway is cofactor biosynthesis; ubiquinone biosynthesis. In terms of biological role, catalyzes the decarboxylation of 3-octaprenyl-4-hydroxy benzoate to 2-octaprenylphenol, an intermediate step in ubiquinone biosynthesis. The chain is 3-octaprenyl-4-hydroxybenzoate carboxy-lyase from Ectopseudomonas mendocina (strain ymp) (Pseudomonas mendocina).